The following is a 161-amino-acid chain: MNSNNCNTNMNMNNNNNMNNNNNPNMNNNICQSNNMNNQYRNNNMNNFSNTHNNNNNNNNNNTIQNFNDNSLKKRRFEDDSHQNFNDNGFNNNNNNNNSNMNHNFSNQNNYNNNNNNNNNNNSNFNGIVFKSKKGTSSQVGNNKKKQFNNNLEISDWNKLS.

Disordered stretches follow at residues 1-67 (MNSN…IQNF) and 80-147 (DSHQ…KKKQ). Residues 84-126 (NFNDNGFNNNNNNNNSNMNHNFSNQNNYNNNNNNNNNNNSNFN) are compositionally biased toward low complexity. The span at 135 to 147 (GTSSQVGNNKKKQ) shows a compositional bias: polar residues.

This is an uncharacterized protein from Dictyostelium discoideum (Social amoeba).